A 178-amino-acid polypeptide reads, in one-letter code: Mediator of RNA polymerase II transcription subunit 28 (178 aa).

A disordered region spans residues 1–43; sequence MAASLGGMFAGQPPGPPPPPPGLPGQASLLQAAPGAPRPSNST. Positions 13–23 are enriched in pro residues; sequence PPGPPPPPPGL. A coiled-coil region spans residues 109–145; it reads QVIKEDVSELRSELQRKDALVQKHLTKLRHWQQVLED.

The protein belongs to the Mediator complex subunit 28 family. As to quaternary structure, forms a ternary complex with NF2/merlin and GRB2. Binds to actin. Component of the Mediator complex, which is probably composed of MED1, MED4, MED6, MED7, MED8, MED9, MED10, MED11, MED12, MED13, MED13L, MED14, MED15, MED16, MED17, MED18, MED19, MED20, MED21, MED22, MED23, MED24, MED25, MED26, MED27, MED29, MED30, MED31, CCNC, CDK8 and CDC2L6/CDK11. The MED12, MED13, CCNC and CDK8 subunits form a distinct module termed the CDK8 module. Mediator containing the CDK8 module is less active than Mediator lacking this module in supporting transcriptional activation. Individual preparations of the Mediator complex lacking one or more distinct subunits have been variously termed ARC, CRSP, DRIP, PC2, SMCC and TRAP.

The protein localises to the nucleus. It localises to the cytoplasm. It is found in the membrane. Functionally, may be part of a complex containing NF2/merlin that participates in cellular signaling to the actin cytoskeleton downstream of tyrosine kinase signaling pathways. Component of the Mediator complex, a coactivator involved in the regulated transcription of nearly all RNA polymerase II-dependent genes. Mediator functions as a bridge to convey information from gene-specific regulatory proteins to the basal RNA polymerase II transcription machinery. Mediator is recruited to promoters by direct interactions with regulatory proteins and serves as a scaffold for the assembly of a functional preinitiation complex with RNA polymerase II and the general transcription factors. This Rattus norvegicus (Rat) protein is Mediator of RNA polymerase II transcription subunit 28 (Med28).